Here is a 297-residue protein sequence, read N- to C-terminus: MSETTYFGRVITAMVTPFTVEGQVNYALVEKLADYLVTHGSDGIVVCGTTGESPTLSWQEEYELFSIVKKAVNGRGKVIAGTGSNSTSEAIEATQQAAKLGLDGSLQVVPYYNKPPQEGLYEHFLTIAKACPDLPVMLYNIPGRTGQNMTPETIIKLAAVDNIVAVKEASGNLEQTCKIYCHTPENFAIYSGDDFLTLPLMTCGAVGVVSVASHLVGEEIQGMIQALLTGDAAKAIEINLKLFPLFKGLFCATNPIPIKAALNLVGWEVGGLRLPLCSLSPELEEGLAKIMQELALI.

Thr-50 serves as a coordination point for pyruvate. The active-site Proton donor/acceptor is the Tyr-139. Catalysis depends on Lys-167, which acts as the Schiff-base intermediate with substrate. Val-209 is a pyruvate binding site.

It belongs to the DapA family. Homotetramer; dimer of dimers.

It is found in the cytoplasm. It carries out the reaction L-aspartate 4-semialdehyde + pyruvate = (2S,4S)-4-hydroxy-2,3,4,5-tetrahydrodipicolinate + H2O + H(+). It participates in amino-acid biosynthesis; L-lysine biosynthesis via DAP pathway; (S)-tetrahydrodipicolinate from L-aspartate: step 3/4. In terms of biological role, catalyzes the condensation of (S)-aspartate-beta-semialdehyde [(S)-ASA] and pyruvate to 4-hydroxy-tetrahydrodipicolinate (HTPA). The polypeptide is 4-hydroxy-tetrahydrodipicolinate synthase (Microcystis aeruginosa (strain NIES-843 / IAM M-2473)).